Reading from the N-terminus, the 243-residue chain is MNIVPLSQAPPEFLEVAWLADACKLLMGVGWTANYIGMIYKSIKDRTYGMALMPLCCNFAWELVYALILPFDSGMEKWVHVTGLAFNCGVMYTAIKFAPGEWAHARLVQRHLTWIFIASVAGWMSAHLALAAQLGPSLAQAWSAYGCQLLLSVGGLCQLLCRGHSRGTSYLLWFSRFFGSLVLIPQDILRYKYWRRDHEWMKSPLYLWFVSIFLILDGSYGILLWYVRRFERETAEAENRKRR.

7 helical membrane-spanning segments follow: residues 13–33 (FLEV…GWTA), 51–71 (ALMP…ILPF), 78–98 (WVHV…IKFA), 112–132 (LTWI…ALAA), 141–161 (AWSA…QLLC), 169–189 (SYLL…QDIL), and 207–227 (LWFV…LWYV).

Belongs to the paxB family.

It is found in the membrane. The protein operates within secondary metabolite biosynthesis; terpenoid biosynthesis. Terpene cyclase; part of the gene cluster that mediates the biosynthesis of diterpenoid pyrones. The first step of the pathway is the synthesis of the alpha-pyrone moiety by the polyketide synthase dpmpA via condensation of one acetyl-CoA starter unit with 3 malonyl-CoA units and 2 methylations. The alpha-pyrone is then combined with geranylgeranyl pyrophosphate (GGPP) formed by the GGPP synthase dpmpD through the action of the prenyltransferase dpmpC to yield a linear alpha-pyrone diterpenoid. Subsequent steps in the diterpenoid pyrone biosynthetic pathway involve the decalin core formation, which is initiated by the epoxidation of the C10-C11 olefin by the FAD-dependent oxidoreductase dpmpE, and is followed by a cyclization cascade catalyzed by the terpene cyclase dpmpB. The short chain dehydrogenase/reductase dpmpG then oxidizes the 8S hydroxy group to a ketone and the short chain dehydrogenase/reductase dpmpH reduces the ketone to the 8R hydroxy group to yield higginsianin B. Higginsianin B is further methylated by the methyltransferase dpmpI to produce the intermediate named FDDP B. The cytochrome P450 monooxygenase dpmpJ then oxidizes the C-26 methyl to primary alcohol, producing the final diterpenoid pyrone with a C-26 primary alcohol on the gamma-pyrone moiety named FDDP C. The sequence is that of Terpene cyclase dpmpB from Macrophomina phaseolina (strain MS6) (Charcoal rot fungus).